Reading from the N-terminus, the 141-residue chain is Drosulfakinins (141 aa).

A signal peptide spans 1–33 (MGLRSCTHLATLFMTLWALAFCFLVVVPIPAQT). Positions 34–73 (TSLQNAKDDRRLQELESKIGAESDQPNANLVGPSFSRFGD) are excised as a propeptide. A disordered region spans residues 51-72 (KIGAESDQPNANLVGPSFSRFG). Residue Phe-82 is modified to Phenylalanine amide. Residues 86-111 (VPLISRPMIPIELDLLMDNDDERTKA) constitute a propeptide that is removed on maturation. Tyr-117 bears the Sulfotyrosine mark. Phe-122 is subject to Phenylalanine amide. Residue Tyr-134 is modified to Sulfotyrosine. The residue at position 139 (Phe-139) is a Phenylalanine amide.

The protein belongs to the gastrin/cholecystokinin family.

The protein localises to the secreted. In terms of biological role, drosulfakinin-0 (DSK 0) plays diverse biological roles including regulating gut muscle contraction in adults but not in larvae. In Drosophila mauritiana (Fruit fly), this protein is Drosulfakinins.